Consider the following 202-residue polypeptide: MSRYRGPRLKIVRRLGELPGLTRKMAKRKSPPGQHGAASKKPSQYRIRLEEKQKLRYNYGVTEKQLLRYMQRARRAKGSSGENLLQLLEMRLDTTIFRLGMAPTMLSARQLITHGHILVSEQRVNIPSYQCSPKEKISIRSNSRSRKLIEGYMSTMGSIVTPPHLELKKEKLEGNIQEIIDRQWVGLPINELLVVEYYSPKV.

Residues 18–45 (LPGLTRKMAKRKSPPGQHGAASKKPSQY) are disordered. In terms of domain architecture, S4 RNA-binding spans 90–152 (MRLDTTIFRL…SRSRKLIEGY (63 aa)).

The protein belongs to the universal ribosomal protein uS4 family. Part of the 30S ribosomal subunit. Contacts protein S5. The interaction surface between S4 and S5 is involved in control of translational fidelity.

It localises to the plastid. The protein resides in the chloroplast. Functionally, one of the primary rRNA binding proteins, it binds directly to 16S rRNA where it nucleates assembly of the body of the 30S subunit. In terms of biological role, with S5 and S12 plays an important role in translational accuracy. In Nephroselmis olivacea (Green alga), this protein is Small ribosomal subunit protein uS4c (rps4).